The following is a 167-amino-acid chain: MKPQLLLLEDVDGLGRSGDLVVAKPGYVRNYLLPKGKAVVASAGTLRLQAKLQEQRLLQAAADKEESLRLAEMLRSIVLDFQVRVDSENNMYGSVTVNDMISAAEQQGVVLTRKNFPRSHSGIKNLGRHVVGLKLKEGVTADLHLEVRADHEIIEQKELQSAEEQEG.

The protein belongs to the bacterial ribosomal protein bL9 family.

Functionally, binds to the 23S rRNA. The protein is Large ribosomal subunit protein bL9 of Chlamydia trachomatis serovar L2 (strain ATCC VR-902B / DSM 19102 / 434/Bu).